The chain runs to 430 residues: MNFVEELRWRGMLQDIMPGTEELLNKEQVTAYLGIDPTADSLHIGHLCGVMILRHLQRCGHKPLALIGGATGMIGDPSGKSAERNLLNEETLRHNQACIKKQLAKFLDFESDVPNRAELVNNYDWMKEFSFLDFVREVGKHITVNYMMAKDSVKRRLNGEARDGLSFTEFTYQLLQGYDFLHLYETKGCKLQMGGSDQWGNITTGAELIRRTNGGEVFALTCPLITKADGGKFGKTESGNIWLDPRYTSPYKFYQFWLNVSDSDAERYIKIFTSIEKEEIEALVAEHQQAPHLRALQKRLAKEVTIMVHSEEDYNAAVDASNILFGNATSESLRKLDEDTLLAVFEGVPQFEISRDALAEGVKAVDLFVDNAAVFASKGEMRKLVQGGGVSLNKEKLEAFDQVITTADLLDGKYLLVQRGKKNYFLLIAK.

Tyr32 is a binding site for L-tyrosine. The 'HIGH' region signature appears at 37-46; the sequence is PTADSLHIGH. Residues Tyr172 and Gln176 each coordinate L-tyrosine. The 'KMSKS' region motif lies at 232–236; that stretch reads KFGKT. An ATP-binding site is contributed by Lys235. The S4 RNA-binding domain occupies 362 to 429; the sequence is VKAVDLFVDN…GKKNYFLLIA (68 aa).

Belongs to the class-I aminoacyl-tRNA synthetase family. TyrS type 1 subfamily. As to quaternary structure, homodimer.

The protein localises to the cytoplasm. It catalyses the reaction tRNA(Tyr) + L-tyrosine + ATP = L-tyrosyl-tRNA(Tyr) + AMP + diphosphate + H(+). In terms of biological role, catalyzes the attachment of tyrosine to tRNA(Tyr) in a two-step reaction: tyrosine is first activated by ATP to form Tyr-AMP and then transferred to the acceptor end of tRNA(Tyr). The protein is Tyrosine--tRNA ligase of Bacteroides thetaiotaomicron (strain ATCC 29148 / DSM 2079 / JCM 5827 / CCUG 10774 / NCTC 10582 / VPI-5482 / E50).